The chain runs to 787 residues: Endonuclease MutS2 (787 aa).

An ATP-binding site is contributed by G336–T343. Positions L712 to K787 constitute a Smr domain.

The protein belongs to the DNA mismatch repair MutS family. MutS2 subfamily. Homodimer. Binds to stalled ribosomes, contacting rRNA.

Endonuclease that is involved in the suppression of homologous recombination and thus may have a key role in the control of bacterial genetic diversity. Functionally, acts as a ribosome collision sensor, splitting the ribosome into its 2 subunits. Detects stalled/collided 70S ribosomes which it binds and splits by an ATP-hydrolysis driven conformational change. Acts upstream of the ribosome quality control system (RQC), a ribosome-associated complex that mediates the extraction of incompletely synthesized nascent chains from stalled ribosomes and their subsequent degradation. Probably generates substrates for RQC. The polypeptide is Endonuclease MutS2 (Lactiplantibacillus plantarum (strain ATCC BAA-793 / NCIMB 8826 / WCFS1) (Lactobacillus plantarum)).